Reading from the N-terminus, the 288-residue chain is Light-independent protochlorophyllide reductase iron-sulfur ATP-binding protein (288 aa).

ATP-binding positions include 12-17 and Lys41; that span reads GIGKST. Ser16 contacts Mg(2+). Residues Cys97 and Cys131 each contribute to the [4Fe-4S] cluster site. Position 182-183 (182-183) interacts with ATP; sequence NR.

This sequence belongs to the NifH/BchL/ChlL family. Homodimer. Protochlorophyllide reductase is composed of three subunits; ChlL, ChlN and ChlB. [4Fe-4S] cluster serves as cofactor.

The enzyme catalyses chlorophyllide a + oxidized 2[4Fe-4S]-[ferredoxin] + 2 ADP + 2 phosphate = protochlorophyllide a + reduced 2[4Fe-4S]-[ferredoxin] + 2 ATP + 2 H2O. The protein operates within porphyrin-containing compound metabolism; chlorophyll biosynthesis (light-independent). In terms of biological role, component of the dark-operative protochlorophyllide reductase (DPOR) that uses Mg-ATP and reduced ferredoxin to reduce ring D of protochlorophyllide (Pchlide) to form chlorophyllide a (Chlide). This reaction is light-independent. The L component serves as a unique electron donor to the NB-component of the complex, and binds Mg-ATP. The sequence is that of Light-independent protochlorophyllide reductase iron-sulfur ATP-binding protein from Synechocystis sp. (strain ATCC 27184 / PCC 6803 / Kazusa).